Here is a 402-residue protein sequence, read N- to C-terminus: Olfactomedin-like protein 1 (402 aa).

A signal peptide spans 1–28 (MMVALPGASASLVLFLAAFLPPLQHAQD). N-linked (GlcNAc...) asparagine glycosylation is present at Asn66. Residues 73–135 (RCQTHTNEYR…EAEEEKKIRT (63 aa)) are a coiled coil. Asn138 and Asn183 each carry an N-linked (GlcNAc...) asparagine glycan. The region spanning 140-397 (SCDNMLMAIK…QIIYKLQTKK (258 aa)) is the Olfactomedin-like domain. A disulfide bridge links Cys141 with Cys324.

Highly N-glycosylated.

The protein localises to the secreted. The polypeptide is Olfactomedin-like protein 1 (Olfml1) (Rattus norvegicus (Rat)).